The chain runs to 173 residues: UPF0316 protein Amet_0954 (173 aa).

The next 3 helical transmembrane spans lie at 3–23 (LVLG…MGTV), 38–58 (AIGF…LEAL), and 61–81 (PVNI…GIYI).

This sequence belongs to the UPF0316 family.

The protein resides in the cell membrane. The sequence is that of UPF0316 protein Amet_0954 from Alkaliphilus metalliredigens (strain QYMF).